Here is a 158-residue protein sequence, read N- to C-terminus: 3-hydroxyacyl-[acyl-carrier-protein] dehydratase FabZ (158 aa).

The active site involves histidine 60.

The protein belongs to the thioester dehydratase family. FabZ subfamily.

The protein resides in the cytoplasm. The catalysed reaction is a (3R)-hydroxyacyl-[ACP] = a (2E)-enoyl-[ACP] + H2O. Its function is as follows. Involved in unsaturated fatty acids biosynthesis. Catalyzes the dehydration of short chain beta-hydroxyacyl-ACPs and long chain saturated and unsaturated beta-hydroxyacyl-ACPs. The chain is 3-hydroxyacyl-[acyl-carrier-protein] dehydratase FabZ from Zymomonas mobilis subsp. mobilis (strain ATCC 31821 / ZM4 / CP4).